The chain runs to 397 residues: Chorismate synthase (397 aa).

NADP(+) contacts are provided by arginine 40 and arginine 46. FMN is bound by residues 129 to 131, 257 to 258, glycine 302, 317 to 321, and arginine 343; these read RSS, QA, and KPISS.

It belongs to the chorismate synthase family. Homotetramer. FMNH2 is required as a cofactor.

The catalysed reaction is 5-O-(1-carboxyvinyl)-3-phosphoshikimate = chorismate + phosphate. It participates in metabolic intermediate biosynthesis; chorismate biosynthesis; chorismate from D-erythrose 4-phosphate and phosphoenolpyruvate: step 7/7. Functionally, catalyzes the anti-1,4-elimination of the C-3 phosphate and the C-6 proR hydrogen from 5-enolpyruvylshikimate-3-phosphate (EPSP) to yield chorismate, which is the branch point compound that serves as the starting substrate for the three terminal pathways of aromatic amino acid biosynthesis. This reaction introduces a second double bond into the aromatic ring system. The sequence is that of Chorismate synthase from Chlorobaculum tepidum (strain ATCC 49652 / DSM 12025 / NBRC 103806 / TLS) (Chlorobium tepidum).